Reading from the N-terminus, the 598-residue chain is MFS transporter L2 (598 aa).

Helical transmembrane passes span 83 to 103 (IAAFLSLCIIVLMAALDATSI), 122 to 142 (FWAGTSFLLTSTIFQPVLGSF), and 150 to 170 (SLIYISLVFFLAGSIIPAVAN). Asn171 is a glycosylation site (N-linked (GlcNAc...) asparagine). A run of 5 helical transmembrane segments spans residues 183 to 203 (GVGGGGIIALTEMVVVDTVPL), 212 to 232 (FFGMMWSFGTVAGPLIGGAFA), 239 to 259 (WVFWINLPFLGIGTVLITVFL), 277 to 297 (WIGMVLFLGSTTGFLIPITWG), and 309 to 329 (LVPLIVSAAGIVAFIVHQEKF). An N-linked (GlcNAc...) asparagine glycan is attached at Asn342. 6 consecutive transmembrane segments (helical) span residues 346-366 (ALLYLTTVIHGIILWAILYFM), 383-403 (VALFPWTFTVAPGAVATGIAI), 411-431 (WANWAGWFLATLGSGLLILLK), 439-459 (WIFLNLVGGIGTGILFPAMAL), 476-496 (MFSFFRAFGQTLGVAIGGVVF), and 550-570 (YIWIVATVLAGVSLVATLFID).

The protein belongs to the major facilitator superfamily.

It localises to the membrane. In terms of biological role, MFS transporter; part of the gene cluster that mediates the biosynthesis of squalestatin S1 (SQS1, also known as zaragozic acid A), a lead compound for the treatment of hyper-cholesterolemia by targeting squalene synthase (SS). This is MFS transporter L2 from Phoma sp. (strain ATCC 20986 / MF5453).